Consider the following 707-residue polypeptide: Polyribonucleotide nucleotidyltransferase (707 aa).

Mg(2+)-binding residues include Asp486 and Asp492. The KH domain occupies 553-612 (PRIHKIKINPEKIKDVIGKGGSVIRMLTEETGTIIEIEDDGTIKISATIGEKAKNAIRRI). An S1 motif domain is found at 622-690 (GRIYSGKVTR…RQGRLRLSIK (69 aa)).

The protein belongs to the polyribonucleotide nucleotidyltransferase family. As to quaternary structure, component of the RNA degradosome, which is a multiprotein complex involved in RNA processing and mRNA degradation. Mg(2+) is required as a cofactor.

Its subcellular location is the cytoplasm. The catalysed reaction is RNA(n+1) + phosphate = RNA(n) + a ribonucleoside 5'-diphosphate. Its function is as follows. Involved in mRNA degradation. Catalyzes the phosphorolysis of single-stranded polyribonucleotides processively in the 3'- to 5'-direction. The chain is Polyribonucleotide nucleotidyltransferase from Buchnera aphidicola subsp. Schizaphis graminum (strain Sg).